A 370-amino-acid chain; its full sequence is L-lysine 4-hydroxylase (370 aa).

3 residues coordinate Fe cation: His176, Glu178, and His310.

It belongs to the clavaminate synthase family. It depends on Fe(2+) as a cofactor.

It carries out the reaction L-lysine + 2-oxoglutarate + O2 = (4R)-4-hydroxy-L-lysine + succinate + CO2. In terms of biological role, alpha-ketoglutarate-dependent dioxygenase that in vitro catalyzes the regio- and stereoselective hydroxylation of L-lysine, leading to (4R)-4-hydroxy-L-lysine. To a lesser extent, can also use (3S)-3-hydroxy-L-lysine as substrate, producing the dihydroxylated product (3R,4R)-3,4-hydroxy-L-lysine. Cannot use D-lysine or L-ornithine as substrate. The protein is L-lysine 4-hydroxylase of Flavobacterium johnsoniae (strain ATCC 17061 / DSM 2064 / JCM 8514 / BCRC 14874 / CCUG 350202 / NBRC 14942 / NCIMB 11054 / UW101) (Cytophaga johnsonae).